The chain runs to 314 residues: Protein phosphatase PTC7 homolog fig (314 aa).

In terms of domain architecture, PPM-type phosphatase spans 43 to 309 (PYLVTVVQGR…DDITLILSSV (267 aa)). Mn(2+) contacts are provided by Asp-87, Gly-88, and Asp-232.

It belongs to the PP2C family. The cofactor is Mg(2+). Mn(2+) serves as cofactor.

It carries out the reaction O-phospho-L-seryl-[protein] + H2O = L-seryl-[protein] + phosphate. The enzyme catalyses O-phospho-L-threonyl-[protein] + H2O = L-threonyl-[protein] + phosphate. In Drosophila melanogaster (Fruit fly), this protein is Protein phosphatase PTC7 homolog fig.